Consider the following 339-residue polypeptide: UDP-N-acetylglucosamine--N-acetylmuramyl-(pentapeptide) pyrophosphoryl-undecaprenol N-acetylglucosamine transferase (339 aa).

UDP-N-acetyl-alpha-D-glucosamine is bound by residues 11–13, Asn-127, Arg-170, Ser-188, Ile-235, and Gln-280; that span reads TGG.

Belongs to the glycosyltransferase 28 family. MurG subfamily.

It localises to the cell inner membrane. It catalyses the reaction di-trans,octa-cis-undecaprenyl diphospho-N-acetyl-alpha-D-muramoyl-L-alanyl-D-glutamyl-meso-2,6-diaminopimeloyl-D-alanyl-D-alanine + UDP-N-acetyl-alpha-D-glucosamine = di-trans,octa-cis-undecaprenyl diphospho-[N-acetyl-alpha-D-glucosaminyl-(1-&gt;4)]-N-acetyl-alpha-D-muramoyl-L-alanyl-D-glutamyl-meso-2,6-diaminopimeloyl-D-alanyl-D-alanine + UDP + H(+). It participates in cell wall biogenesis; peptidoglycan biosynthesis. In terms of biological role, cell wall formation. Catalyzes the transfer of a GlcNAc subunit on undecaprenyl-pyrophosphoryl-MurNAc-pentapeptide (lipid intermediate I) to form undecaprenyl-pyrophosphoryl-MurNAc-(pentapeptide)GlcNAc (lipid intermediate II). The protein is UDP-N-acetylglucosamine--N-acetylmuramyl-(pentapeptide) pyrophosphoryl-undecaprenol N-acetylglucosamine transferase of Thermotoga neapolitana (strain ATCC 49049 / DSM 4359 / NBRC 107923 / NS-E).